Here is a 367-residue protein sequence, read N- to C-terminus: Molybdopterin synthase catalytic subunit (367 aa).

Substrate-binding positions include His101–Arg102, Lys117, and Lys124–Glu126. Positions Arg325–Ala350 are disordered.

The protein belongs to the MoaE family. MOCS2B subfamily. As to quaternary structure, heterotetramer; composed of 2 small (Mocs2A) and 2 large (Mocs2B) subunits. Component of the Ada2a-containing (ATAC) complex composed of at least Ada2a, Atac1, Hcf, Ada3, Gcn5, Mocs2B, Charac-14, Atac3, Atac2, NC2beta and wds.

Its subcellular location is the cytoplasm. It localises to the nucleus. The catalysed reaction is 2 [molybdopterin-synthase sulfur-carrier protein]-C-terminal-Gly-aminoethanethioate + cyclic pyranopterin phosphate + H2O = molybdopterin + 2 [molybdopterin-synthase sulfur-carrier protein]-C-terminal Gly-Gly + 2 H(+). The protein operates within cofactor biosynthesis; molybdopterin biosynthesis. In terms of biological role, catalytic subunit of the molybdopterin synthase complex, a complex that catalyzes the conversion of precursor Z into molybdopterin. Acts by mediating the incorporation of 2 sulfur atoms from thiocarboxylated Mocs2A into precursor Z to generate a dithiolene group. Involved during biosynthesis of the molybdenum cofactor. The protein is Molybdopterin synthase catalytic subunit of Drosophila melanogaster (Fruit fly).